Reading from the N-terminus, the 560-residue chain is Dihydroxy-acid dehydratase (560 aa).

A Mg(2+)-binding site is contributed by Asp-80. [2Fe-2S] cluster is bound at residue Cys-121. Positions 122 and 123 each coordinate Mg(2+). An N6-carboxylysine modification is found at Lys-123. Cys-194 contacts [2Fe-2S] cluster. Position 447 (Glu-447) interacts with Mg(2+). Residue Ser-473 is the Proton acceptor of the active site.

Belongs to the IlvD/Edd family. In terms of assembly, homodimer. [2Fe-2S] cluster is required as a cofactor. The cofactor is Mg(2+).

It catalyses the reaction (2R)-2,3-dihydroxy-3-methylbutanoate = 3-methyl-2-oxobutanoate + H2O. The catalysed reaction is (2R,3R)-2,3-dihydroxy-3-methylpentanoate = (S)-3-methyl-2-oxopentanoate + H2O. It functions in the pathway amino-acid biosynthesis; L-isoleucine biosynthesis; L-isoleucine from 2-oxobutanoate: step 3/4. Its pathway is amino-acid biosynthesis; L-valine biosynthesis; L-valine from pyruvate: step 3/4. Its function is as follows. Functions in the biosynthesis of branched-chain amino acids. Catalyzes the dehydration of (2R,3R)-2,3-dihydroxy-3-methylpentanoate (2,3-dihydroxy-3-methylvalerate) into 2-oxo-3-methylpentanoate (2-oxo-3-methylvalerate) and of (2R)-2,3-dihydroxy-3-methylbutanoate (2,3-dihydroxyisovalerate) into 2-oxo-3-methylbutanoate (2-oxoisovalerate), the penultimate precursor to L-isoleucine and L-valine, respectively. This chain is Dihydroxy-acid dehydratase, found in Chloroherpeton thalassium (strain ATCC 35110 / GB-78).